The primary structure comprises 357 residues: UDP-3-O-acylglucosamine N-acyltransferase (357 aa).

H258 (proton acceptor) is an active-site residue.

This sequence belongs to the transferase hexapeptide repeat family. LpxD subfamily. In terms of assembly, homotrimer.

The enzyme catalyses a UDP-3-O-[(3R)-3-hydroxyacyl]-alpha-D-glucosamine + a (3R)-hydroxyacyl-[ACP] = a UDP-2-N,3-O-bis[(3R)-3-hydroxyacyl]-alpha-D-glucosamine + holo-[ACP] + H(+). It functions in the pathway bacterial outer membrane biogenesis; LPS lipid A biosynthesis. Catalyzes the N-acylation of UDP-3-O-acylglucosamine using 3-hydroxyacyl-ACP as the acyl donor. Is involved in the biosynthesis of lipid A, a phosphorylated glycolipid that anchors the lipopolysaccharide to the outer membrane of the cell. This chain is UDP-3-O-acylglucosamine N-acyltransferase, found in Azorhizobium caulinodans (strain ATCC 43989 / DSM 5975 / JCM 20966 / LMG 6465 / NBRC 14845 / NCIMB 13405 / ORS 571).